Reading from the N-terminus, the 307-residue chain is Regulating synaptic membrane exocytosis protein 3 (307 aa).

Residues 86–120 are disordered; the sequence is STETGIAVEMRSRVTRQGSRESTDGSTNSNSSEGT. The segment covering 109–119 has biased composition (polar residues); sequence DGSTNSNSSEG. A C2 domain is found at 155–273; it reads PMGDVHIAIM…DLSAAVTGWY (119 aa). Residues Ser294 and Ser297 each carry the phosphoserine modification.

In terms of assembly, binds PPFIA3. Does not bind RAB3.

The protein resides in the synapse. Its function is as follows. Regulates synaptic membrane exocytosis. The chain is Regulating synaptic membrane exocytosis protein 3 (Rims3) from Mus musculus (Mouse).